Consider the following 136-residue polypeptide: Large ribosomal subunit protein uL16 (136 aa).

Belongs to the universal ribosomal protein uL16 family. As to quaternary structure, part of the 50S ribosomal subunit.

Binds 23S rRNA and is also seen to make contacts with the A and possibly P site tRNAs. This chain is Large ribosomal subunit protein uL16, found in Buchnera aphidicola subsp. Acyrthosiphon pisum (strain 5A).